The sequence spans 547 residues: Chaperonin GroEL (547 aa).

Residues 30-33 (TLGP), K51, 87-91 (DGTTT), G415, and D495 each bind ATP. The tract at residues 526-547 (KKESAGGGGMPGGMGGMGGMDF) is disordered. A compositionally biased stretch (gly residues) spans 530–547 (AGGGGMPGGMGGMGGMDF).

Belongs to the chaperonin (HSP60) family. In terms of assembly, forms a cylinder of 14 subunits composed of two heptameric rings stacked back-to-back. Interacts with the co-chaperonin GroES.

It is found in the cytoplasm. It catalyses the reaction ATP + H2O + a folded polypeptide = ADP + phosphate + an unfolded polypeptide.. In terms of biological role, together with its co-chaperonin GroES, plays an essential role in assisting protein folding. The GroEL-GroES system forms a nano-cage that allows encapsulation of the non-native substrate proteins and provides a physical environment optimized to promote and accelerate protein folding. The polypeptide is Chaperonin GroEL (Hyphomonas neptunium (strain ATCC 15444)).